A 607-amino-acid polypeptide reads, in one-letter code: Threonine--tRNA ligase (607 aa).

The editing domain stretch occupies residues 1 to 143 (MRVLYIHAER…SFKPEEARVA (143 aa)). Catalytic stretches follow at residues 193 to 489 (PRYL…PRLP) and 194 to 489 (RYLD…PRLP). Residues cysteine 286, histidine 337, and histidine 458 each coordinate Zn(2+).

The protein belongs to the class-II aminoacyl-tRNA synthetase family. Homodimer. Requires Zn(2+) as cofactor.

The protein resides in the cytoplasm. The enzyme catalyses tRNA(Thr) + L-threonine + ATP = L-threonyl-tRNA(Thr) + AMP + diphosphate + H(+). Functionally, catalyzes the attachment of threonine to tRNA(Thr) in a two-step reaction: L-threonine is first activated by ATP to form Thr-AMP and then transferred to the acceptor end of tRNA(Thr). Also edits incorrectly charged L-seryl-tRNA(Thr). The protein is Threonine--tRNA ligase of Pyrobaculum calidifontis (strain DSM 21063 / JCM 11548 / VA1).